A 461-amino-acid chain; its full sequence is Probable lipid II flippase MurJ (461 aa).

The next 12 helical transmembrane spans lie at 5 to 25, 51 to 71, 96 to 116, 123 to 143, 156 to 176, 229 to 249, 258 to 278, 293 to 313, 337 to 357, 372 to 392, 402 to 422, and 429 to 449; these read ILGA…PNLF, FASL…LLVA, IVAI…LGAL, FFAS…ALLI, LSYG…YPLV, IASF…VSYL, LPLA…IAIA, KAWF…IMLS, VFSL…FSLW, LISL…LGVL, GLFL…LGII, and LVIL…KSWV.

This sequence belongs to the MurJ/MviN family.

The protein resides in the cell inner membrane. The protein operates within cell wall biogenesis; peptidoglycan biosynthesis. Its function is as follows. Involved in peptidoglycan biosynthesis. Transports lipid-linked peptidoglycan precursors from the inner to the outer leaflet of the cytoplasmic membrane. The sequence is that of Probable lipid II flippase MurJ from Helicobacter pylori (strain ATCC 700392 / 26695) (Campylobacter pylori).